Reading from the N-terminus, the 207-residue chain is Ras-related protein rab7 (207 aa).

GTP-binding positions include G15–T22, S34–T40, D63–Q67, N125–D128, and A156–K157. The Effector region signature appears at Y37–F45. Residues C205 and C207 are each lipidated (S-geranylgeranyl cysteine). Residue C207 is modified to Cysteine methyl ester.

This sequence belongs to the small GTPase superfamily. Rab family. In terms of assembly, (Microbial infection) Interacts with Singapore grouper iridoviral proteins VP69 (ORF69) and VP101 (ORF101). Ubiquitously expressed. Expressed in liver, spleen, kidney, brain, intestine, heart, skin, muscle, gill and stomach.

It is found in the late endosome membrane. The protein resides in the lysosome membrane. Key regulator in endo-lysosomal trafficking. Governs early-to-late endosomal maturation, microtubule minus-end as well as plus-end directed endosomal migration and positioning, and endosome-lysosome transport through different protein-protein interaction cascades. Plays important roles in microbial pathogen infection and survival, as well as in participating in the life cycle of viruses. In Epinephelus coioides (Orange-spotted grouper), this protein is Ras-related protein rab7.